Here is an 833-residue protein sequence, read N- to C-terminus: Leucine--tRNA ligase (833 aa).

The short motif at P41–H52 is the 'HIGH' region element. Positions K610 to S614 match the 'KMSKS' region motif. Residue K613 participates in ATP binding.

It belongs to the class-I aminoacyl-tRNA synthetase family.

The protein localises to the cytoplasm. The catalysed reaction is tRNA(Leu) + L-leucine + ATP = L-leucyl-tRNA(Leu) + AMP + diphosphate. The chain is Leucine--tRNA ligase from Streptococcus pneumoniae (strain CGSP14).